The primary structure comprises 230 residues: Ribose-5-phosphate isomerase A (230 aa).

Residues 29–32 (TGST), 85–88 (DGAD), and 99–102 (KGAG) each bind substrate. Glu108 (proton acceptor) is an active-site residue. Substrate is bound at residue Lys126.

Belongs to the ribose 5-phosphate isomerase family. Homodimer.

The enzyme catalyses aldehydo-D-ribose 5-phosphate = D-ribulose 5-phosphate. It participates in carbohydrate degradation; pentose phosphate pathway; D-ribose 5-phosphate from D-ribulose 5-phosphate (non-oxidative stage): step 1/1. In terms of biological role, catalyzes the reversible conversion of ribose-5-phosphate to ribulose 5-phosphate. The polypeptide is Ribose-5-phosphate isomerase A (Synechococcus sp. (strain JA-3-3Ab) (Cyanobacteria bacterium Yellowstone A-Prime)).